The sequence spans 760 residues: NAD(P)H-quinone oxidoreductase subunit 5, chloroplastic (760 aa).

The next 16 membrane-spanning stretches (helical) occupy residues Trp-9–Phe-29, Ile-39–Phe-59, Ile-89–Val-109, Phe-125–Ile-145, Ile-147–Thr-167, Gly-185–Phe-205, Asn-221–Ala-241, Thr-260–Ala-280, Leu-282–Ile-302, Leu-329–Ile-349, Ala-356–Ser-376, Ile-398–Ser-418, Tyr-429–Phe-449, Ile-556–Pro-576, Phe-620–Tyr-640, and Phe-734–Phe-754.

This sequence belongs to the complex I subunit 5 family. In terms of assembly, NDH is composed of at least 16 different subunits, 5 of which are encoded in the nucleus.

The protein localises to the plastid. The protein resides in the chloroplast thylakoid membrane. The catalysed reaction is a plastoquinone + NADH + (n+1) H(+)(in) = a plastoquinol + NAD(+) + n H(+)(out). It catalyses the reaction a plastoquinone + NADPH + (n+1) H(+)(in) = a plastoquinol + NADP(+) + n H(+)(out). In terms of biological role, NDH shuttles electrons from NAD(P)H:plastoquinone, via FMN and iron-sulfur (Fe-S) centers, to quinones in the photosynthetic chain and possibly in a chloroplast respiratory chain. The immediate electron acceptor for the enzyme in this species is believed to be plastoquinone. Couples the redox reaction to proton translocation, and thus conserves the redox energy in a proton gradient. This chain is NAD(P)H-quinone oxidoreductase subunit 5, chloroplastic (ndhF), found in Populus trichocarpa (Western balsam poplar).